The sequence spans 178 residues: Large ribosomal subunit protein uL6 (178 aa).

The protein belongs to the universal ribosomal protein uL6 family. As to quaternary structure, part of the 50S ribosomal subunit.

Functionally, this protein binds to the 23S rRNA, and is important in its secondary structure. It is located near the subunit interface in the base of the L7/L12 stalk, and near the tRNA binding site of the peptidyltransferase center. This chain is Large ribosomal subunit protein uL6, found in Streptococcus mutans serotype c (strain ATCC 700610 / UA159).